The chain runs to 166 residues: Large ribosomal subunit protein uL10 (166 aa).

Belongs to the universal ribosomal protein uL10 family. Part of the ribosomal stalk of the 50S ribosomal subunit. The N-terminus interacts with L11 and the large rRNA to form the base of the stalk. The C-terminus forms an elongated spine to which L12 dimers bind in a sequential fashion forming a multimeric L10(L12)X complex.

Functionally, forms part of the ribosomal stalk, playing a central role in the interaction of the ribosome with GTP-bound translation factors. The chain is Large ribosomal subunit protein uL10 from Bacillus cereus (strain 03BB102).